The primary structure comprises 156 residues: 3-dehydroquinate dehydratase (156 aa).

Catalysis depends on tyrosine 24, which acts as the Proton acceptor. Residues asparagine 76, histidine 82, and aspartate 89 each contribute to the substrate site. Catalysis depends on histidine 102, which acts as the Proton donor. Residues 103–104 (IS) and arginine 113 each bind substrate.

The protein belongs to the type-II 3-dehydroquinase family. Homododecamer.

The enzyme catalyses 3-dehydroquinate = 3-dehydroshikimate + H2O. Its pathway is metabolic intermediate biosynthesis; chorismate biosynthesis; chorismate from D-erythrose 4-phosphate and phosphoenolpyruvate: step 3/7. Its function is as follows. Catalyzes a trans-dehydration via an enolate intermediate. This Nitrobacter winogradskyi (strain ATCC 25391 / DSM 10237 / CIP 104748 / NCIMB 11846 / Nb-255) protein is 3-dehydroquinate dehydratase.